We begin with the raw amino-acid sequence, 482 residues long: Putative alpha-L-fucosidase (482 aa).

Residues 1–16 (MIFLIFSILFLHLANC) form the signal peptide. N-linked (GlcNAc...) asparagine glycans are attached at residues asparagine 182, asparagine 343, asparagine 359, and asparagine 419.

The protein belongs to the glycosyl hydrolase 29 family.

The catalysed reaction is an alpha-L-fucoside + H2O = L-fucose + an alcohol. Functionally, alpha-L-fucosidase is responsible for hydrolyzing the alpha-1,6-linked fucose joined to the reducing-end N-acetylglucosamine of the carbohydrate moieties of glycoproteins. The protein is Putative alpha-L-fucosidase of Caenorhabditis elegans.